A 228-amino-acid polypeptide reads, in one-letter code: Orotidine 5'-phosphate decarboxylase (228 aa).

Substrate is bound by residues aspartate 8, lysine 30, aspartate 59–threonine 68, threonine 118, arginine 178, glutamine 187, glycine 207, and arginine 208. Residue lysine 61 is the Proton donor of the active site.

The protein belongs to the OMP decarboxylase family. Type 1 subfamily. As to quaternary structure, homodimer.

The catalysed reaction is orotidine 5'-phosphate + H(+) = UMP + CO2. It functions in the pathway pyrimidine metabolism; UMP biosynthesis via de novo pathway; UMP from orotate: step 2/2. In terms of biological role, catalyzes the decarboxylation of orotidine 5'-monophosphate (OMP) to uridine 5'-monophosphate (UMP). This Wolinella succinogenes (strain ATCC 29543 / DSM 1740 / CCUG 13145 / JCM 31913 / LMG 7466 / NCTC 11488 / FDC 602W) (Vibrio succinogenes) protein is Orotidine 5'-phosphate decarboxylase.